Reading from the N-terminus, the 237-residue chain is Phosphoribosylaminoimidazole-succinocarboxamide synthase (237 aa).

It belongs to the SAICAR synthetase family.

It carries out the reaction 5-amino-1-(5-phospho-D-ribosyl)imidazole-4-carboxylate + L-aspartate + ATP = (2S)-2-[5-amino-1-(5-phospho-beta-D-ribosyl)imidazole-4-carboxamido]succinate + ADP + phosphate + 2 H(+). Its pathway is purine metabolism; IMP biosynthesis via de novo pathway; 5-amino-1-(5-phospho-D-ribosyl)imidazole-4-carboxamide from 5-amino-1-(5-phospho-D-ribosyl)imidazole-4-carboxylate: step 1/2. The protein is Phosphoribosylaminoimidazole-succinocarboxamide synthase of Fusobacterium nucleatum subsp. nucleatum (strain ATCC 25586 / DSM 15643 / BCRC 10681 / CIP 101130 / JCM 8532 / KCTC 2640 / LMG 13131 / VPI 4355).